Consider the following 95-residue polypeptide: Co-chaperonin GroES (95 aa).

Belongs to the GroES chaperonin family. As to quaternary structure, heptamer of 7 subunits arranged in a ring. Interacts with the chaperonin GroEL.

It is found in the cytoplasm. Functionally, together with the chaperonin GroEL, plays an essential role in assisting protein folding. The GroEL-GroES system forms a nano-cage that allows encapsulation of the non-native substrate proteins and provides a physical environment optimized to promote and accelerate protein folding. GroES binds to the apical surface of the GroEL ring, thereby capping the opening of the GroEL channel. The polypeptide is Co-chaperonin GroES (Methylocella silvestris (strain DSM 15510 / CIP 108128 / LMG 27833 / NCIMB 13906 / BL2)).